We begin with the raw amino-acid sequence, 595 residues long: DNA mismatch repair protein MutL (595 aa).

It belongs to the DNA mismatch repair MutL/HexB family.

In terms of biological role, this protein is involved in the repair of mismatches in DNA. It is required for dam-dependent methyl-directed DNA mismatch repair. May act as a 'molecular matchmaker', a protein that promotes the formation of a stable complex between two or more DNA-binding proteins in an ATP-dependent manner without itself being part of a final effector complex. The sequence is that of DNA mismatch repair protein MutL from Endomicrobium trichonymphae.